Reading from the N-terminus, the 127-residue chain is Aspartate 1-decarboxylase (127 aa).

Residue serine 25 is the Schiff-base intermediate with substrate; via pyruvic acid of the active site. Serine 25 is modified (pyruvic acid (Ser)). Threonine 57 serves as a coordination point for substrate. Tyrosine 58 (proton donor) is an active-site residue. 73–75 (GAA) contributes to the substrate binding site.

This sequence belongs to the PanD family. Heterooctamer of four alpha and four beta subunits. Requires pyruvate as cofactor. Post-translationally, is synthesized initially as an inactive proenzyme, which is activated by self-cleavage at a specific serine bond to produce a beta-subunit with a hydroxyl group at its C-terminus and an alpha-subunit with a pyruvoyl group at its N-terminus.

It localises to the cytoplasm. It carries out the reaction L-aspartate + H(+) = beta-alanine + CO2. It participates in cofactor biosynthesis; (R)-pantothenate biosynthesis; beta-alanine from L-aspartate: step 1/1. In terms of biological role, catalyzes the pyruvoyl-dependent decarboxylation of aspartate to produce beta-alanine. This chain is Aspartate 1-decarboxylase, found in Listeria monocytogenes serotype 4b (strain F2365).